The sequence spans 226 residues: MIVGVILFGGKGTRFSKDFPKQFLKFNGKALMEHTVEKFLLDCFEFLVVVSNKDYINKSIEILKKFEKKIYVIEGGKTREHSTFNAIKFLENKIDLEDIVLIHDGARPFVNKDIIEKNIENAKLFGATVTAISSENTIAVVENDFILSVPKRDSIFIIQTPQTFKYKVLKDSFFKFSNRLDNFTDDSSVVLASGYKVSITEGNKKNIKITTVEDLHLMGVDEIVGG.

It belongs to the IspD/TarI cytidylyltransferase family. IspD subfamily.

It carries out the reaction 2-C-methyl-D-erythritol 4-phosphate + CTP + H(+) = 4-CDP-2-C-methyl-D-erythritol + diphosphate. Its pathway is isoprenoid biosynthesis; isopentenyl diphosphate biosynthesis via DXP pathway; isopentenyl diphosphate from 1-deoxy-D-xylulose 5-phosphate: step 2/6. Its function is as follows. Catalyzes the formation of 4-diphosphocytidyl-2-C-methyl-D-erythritol from CTP and 2-C-methyl-D-erythritol 4-phosphate (MEP). In Thermosipho africanus (strain TCF52B), this protein is 2-C-methyl-D-erythritol 4-phosphate cytidylyltransferase.